The chain runs to 749 residues: Signal transducer and activator of transcription 4 (749 aa).

An SH2 domain is found at 570-665 (WIDGYIMGFV…ENPLKYLYPD (96 aa)). Residue Lys668 is modified to N6-acetyllysine. The residue at position 694 (Tyr694) is a Phosphotyrosine; by JAK. A Phosphoserine modification is found at Ser722.

Belongs to the transcription factor STAT family. Forms a homodimer or a heterodimer with a related family member. Interacts with ARL2BP. Interacts with STAT1. Interacts with JUN; this complex efficiently interacts with the AP-1-related sequence of the IFN-gamma promoter. Post-translationally, acetylation at Lys-668 is required for JAK2-mediated phosphorylation and activation of STAT4. In terms of processing, tyrosine phosphorylated upon IL12 and IFN-alpha activation, but not by IFN-gamma in T-lymphocytes and NK cells. Serine phosphorylation is required for maximal transcriptional activity but not for DNA binding. Phosphorylation by MAP2K6 at Ser-722 is required for full transcriptional activity induced by IL12. However this serine phosphorylation is not required for cell proliferation although critical for IFN-gamma production. Expression is restricted to testis, thymus, and spleen.

It is found in the cytoplasm. The protein localises to the nucleus. Transcriptional regulator mainly expressed in hematopoietic cells that plays a critical role in cellular growth, differentiation and immune response. Plays a key role in the differentiation of T-helper 1 cells and the production of interferon-gamma. Also participates in multiple neutrophil functions including chemotaxis and production of the neutrophil extracellular traps. After IL12 binding to its receptor IL12RB2, STAT4 interacts with the intracellular domain of IL12RB2 and becomes tyrosine phosphorylated. Phosphorylated STAT4 then homodimerizes and migrates to the nucleus where it can recognize STAT target sequences present in IL12 responsive genes. Although IL12 appears to be the predominant activating signal, STAT4 can also be phosphorylated and activated in response to IFN-gamma stimulation via JAK1 and TYK2 and in response to different interleukins including IL23, IL2 and IL35. Transcription activation of IFN-gamma gene is mediated by interaction with JUN that forms a complex that efficiently interacts with the AP-1-related sequence of the IFN-gamma promoter. In response to IFN-alpha/beta signaling, acts as a transcriptional repressor and suppresses IL5 and IL13 mRNA expression during response to T-cell receptor (TCR) activation. The polypeptide is Signal transducer and activator of transcription 4 (Stat4) (Mus musculus (Mouse)).